The following is a 306-amino-acid chain: Enoyl-CoA isomerase/hydratase MYCGRDRAFT_76805 (306 aa).

Residues Ala-103–Leu-107 and Gly-150 each bind substrate.

The protein belongs to the enoyl-CoA hydratase/isomerase family.

It carries out the reaction a (3S)-3-hydroxyacyl-CoA = a (2E)-enoyl-CoA + H2O. The enzyme catalyses a 4-saturated-(3S)-3-hydroxyacyl-CoA = a (3E)-enoyl-CoA + H2O. The protein operates within siderophore biosynthesis. Enoyl-CoA isomerase/hydratase involved in the biosynthesis of a ferrichrome A-like siderophore which may contribute to organismal virulence. The first step of siderophore biosynthesis is performed by the HMG-CoA synthase (HMGS) MYCGRDRAFT_54740 which catalyzes the generation of HMG-CoA and CoA using acetoacetyl-CoA and acetyl-CoA as substrates. The enoyl-CoA isomerase/hydratase MYCGRDRAFT_76805 then catalyzes the conversion of HMG-CoA to methylglutaconyl-CoA. The acyltransferase MYCGRDRAFT_85486 then fuses methylglutaconyl-CoA with hydroxyornithine to yield methylglutaconyl hydroxyornithine. Methylglutaconyl hydroxyornithine is then available for use by the nonribosomal peptide synthetase NRPS2 to generate the ferrichrome A-like siderophore. In Zymoseptoria tritici (strain CBS 115943 / IPO323) (Speckled leaf blotch fungus), this protein is Enoyl-CoA isomerase/hydratase MYCGRDRAFT_76805.